The following is a 225-amino-acid chain: MSDVEEQYQEEQQPVVQEELQVVELATTIPLDVQEAQREVKLFNKWSFEDVEVKDVSLVDYIQIRNPVFVSHTAGKYASKRFRKAQCPIVERLTNSLMMNGRNNGKKLKAVRIVKHALEIIHVLTEQNPIQVVVDAIVNSGAREDSTRIGSSGTVRRQAVDVSPLRRVNQAIALLTIGAREASFRNIKTIAECLAEELINAAKGSSTSYAIKKKDELERVAKSNR.

Belongs to the universal ribosomal protein uS7 family. In terms of assembly, component of the small ribosomal subunit. Mature ribosomes consist of a small (40S) and a large (60S) subunit. The 40S subunit contains about 32 different proteins and 1 molecule of RNA (18S). The 60S subunit contains 45 different proteins and 3 molecules of RNA (25S, 5.8S and 5S).

Its subcellular location is the cytoplasm. Its function is as follows. Component of the ribosome, a large ribonucleoprotein complex responsible for the synthesis of proteins in the cell. The small ribosomal subunit (SSU) binds messenger RNAs (mRNAs) and translates the encoded message by selecting cognate aminoacyl-transfer RNA (tRNA) molecules. The large subunit (LSU) contains the ribosomal catalytic site termed the peptidyl transferase center (PTC), which catalyzes the formation of peptide bonds, thereby polymerizing the amino acids delivered by tRNAs into a polypeptide chain. The nascent polypeptides leave the ribosome through a tunnel in the LSU and interact with protein factors that function in enzymatic processing, targeting, and the membrane insertion of nascent chains at the exit of the ribosomal tunnel. In Candida albicans (strain SC5314 / ATCC MYA-2876) (Yeast), this protein is Small ribosomal subunit protein uS7 (RPS5).